Here is a 210-residue protein sequence, read N- to C-terminus: Putative odorant-binding protein A5 (210 aa).

The signal sequence occupies residues 1–19 (MKLPALHLLFLGFICLARS).

It belongs to the phosphatidylethanolamine-binding protein family. Cells at the bases of a few scattered sensilla on the posterior surface of the antenna.

The protein localises to the secreted. This Drosophila melanogaster (Fruit fly) protein is Putative odorant-binding protein A5 (a5).